Reading from the N-terminus, the 275-residue chain is Putative pyruvate, phosphate dikinase regulatory protein (275 aa).

An ADP-binding site is contributed by 149 to 156 (GVSRTSKT).

This sequence belongs to the pyruvate, phosphate/water dikinase regulatory protein family. PDRP subfamily.

The catalysed reaction is N(tele)-phospho-L-histidyl/L-threonyl-[pyruvate, phosphate dikinase] + ADP = N(tele)-phospho-L-histidyl/O-phospho-L-threonyl-[pyruvate, phosphate dikinase] + AMP + H(+). The enzyme catalyses N(tele)-phospho-L-histidyl/O-phospho-L-threonyl-[pyruvate, phosphate dikinase] + phosphate + H(+) = N(tele)-phospho-L-histidyl/L-threonyl-[pyruvate, phosphate dikinase] + diphosphate. Functionally, bifunctional serine/threonine kinase and phosphorylase involved in the regulation of the pyruvate, phosphate dikinase (PPDK) by catalyzing its phosphorylation/dephosphorylation. This Levilactobacillus brevis (strain ATCC 367 / BCRC 12310 / CIP 105137 / JCM 1170 / LMG 11437 / NCIMB 947 / NCTC 947) (Lactobacillus brevis) protein is Putative pyruvate, phosphate dikinase regulatory protein.